The sequence spans 52 residues: Large ribosomal subunit protein bL33 (52 aa).

Belongs to the bacterial ribosomal protein bL33 family.

This is Large ribosomal subunit protein bL33 (rpmG) from Chlamydia pneumoniae (Chlamydophila pneumoniae).